Here is a 219-residue protein sequence, read N- to C-terminus: Thiamine-phosphate synthase (219 aa).

4-amino-2-methyl-5-(diphosphooxymethyl)pyrimidine contacts are provided by residues 44-48 (QFREK) and asparagine 79. Residues aspartate 80 and aspartate 99 each coordinate Mg(2+). Serine 117 is a 4-amino-2-methyl-5-(diphosphooxymethyl)pyrimidine binding site. 143-145 (TST) is a binding site for 2-[(2R,5Z)-2-carboxy-4-methylthiazol-5(2H)-ylidene]ethyl phosphate. Position 146 (lysine 146) interacts with 4-amino-2-methyl-5-(diphosphooxymethyl)pyrimidine. 2-[(2R,5Z)-2-carboxy-4-methylthiazol-5(2H)-ylidene]ethyl phosphate is bound by residues glycine 175 and 195–196 (IS).

The protein belongs to the thiamine-phosphate synthase family. It depends on Mg(2+) as a cofactor.

It carries out the reaction 2-[(2R,5Z)-2-carboxy-4-methylthiazol-5(2H)-ylidene]ethyl phosphate + 4-amino-2-methyl-5-(diphosphooxymethyl)pyrimidine + 2 H(+) = thiamine phosphate + CO2 + diphosphate. It catalyses the reaction 2-(2-carboxy-4-methylthiazol-5-yl)ethyl phosphate + 4-amino-2-methyl-5-(diphosphooxymethyl)pyrimidine + 2 H(+) = thiamine phosphate + CO2 + diphosphate. The catalysed reaction is 4-methyl-5-(2-phosphooxyethyl)-thiazole + 4-amino-2-methyl-5-(diphosphooxymethyl)pyrimidine + H(+) = thiamine phosphate + diphosphate. It functions in the pathway cofactor biosynthesis; thiamine diphosphate biosynthesis; thiamine phosphate from 4-amino-2-methyl-5-diphosphomethylpyrimidine and 4-methyl-5-(2-phosphoethyl)-thiazole: step 1/1. Condenses 4-methyl-5-(beta-hydroxyethyl)thiazole monophosphate (THZ-P) and 2-methyl-4-amino-5-hydroxymethyl pyrimidine pyrophosphate (HMP-PP) to form thiamine monophosphate (TMP). The polypeptide is Thiamine-phosphate synthase (Bacillus cereus (strain ZK / E33L)).